A 212-amino-acid polypeptide reads, in one-letter code: Imidazole glycerol phosphate synthase subunit HisH (212 aa).

One can recognise a Glutamine amidotransferase type-1 domain in the interval 2–212; sequence RVVVIDYNGG…ILGNFLRWTS (211 aa). Cys-85 functions as the Nucleophile in the catalytic mechanism. Residues His-192 and Glu-194 contribute to the active site.

In terms of assembly, heterodimer of HisH and HisF.

The protein localises to the cytoplasm. The catalysed reaction is 5-[(5-phospho-1-deoxy-D-ribulos-1-ylimino)methylamino]-1-(5-phospho-beta-D-ribosyl)imidazole-4-carboxamide + L-glutamine = D-erythro-1-(imidazol-4-yl)glycerol 3-phosphate + 5-amino-1-(5-phospho-beta-D-ribosyl)imidazole-4-carboxamide + L-glutamate + H(+). It carries out the reaction L-glutamine + H2O = L-glutamate + NH4(+). It functions in the pathway amino-acid biosynthesis; L-histidine biosynthesis; L-histidine from 5-phospho-alpha-D-ribose 1-diphosphate: step 5/9. Functionally, IGPS catalyzes the conversion of PRFAR and glutamine to IGP, AICAR and glutamate. The HisH subunit catalyzes the hydrolysis of glutamine to glutamate and ammonia as part of the synthesis of IGP and AICAR. The resulting ammonia molecule is channeled to the active site of HisF. This Gluconobacter oxydans (strain 621H) (Gluconobacter suboxydans) protein is Imidazole glycerol phosphate synthase subunit HisH.